Consider the following 244-residue polypeptide: 14-3-3 protein beta/alpha-A (244 aa).

Met-1 carries the N-acetylmethionine modification.

It belongs to the 14-3-3 family. As to quaternary structure, homodimer, and heterodimer with other family members.

It is found in the cytoplasm. In terms of biological role, adapter protein implicated in the regulation of a large spectrum of both general and specialized signaling pathways. Binds to a large number of partners, usually by recognition of a phosphoserine or phosphothreonine motif. Binding generally results in the modulation of the activity of the binding partner. The polypeptide is 14-3-3 protein beta/alpha-A (ywhab-a) (Xenopus laevis (African clawed frog)).